The chain runs to 121 residues: Nitrogen fixation nifHD region glnB-like protein 2 (121 aa).

The protein belongs to the P(II) protein family.

In terms of biological role, could be involved in the regulation of nitrogen fixation. The protein is Nitrogen fixation nifHD region glnB-like protein 2 (glnBII) of Methanococcus maripaludis (Methanococcus deltae).